A 204-amino-acid chain; its full sequence is Large ribosomal subunit protein uL4 (204 aa).

Residues 47–69 (KAQKNRAAVSGGGKKPWRQKGTG) form a disordered region.

It belongs to the universal ribosomal protein uL4 family. In terms of assembly, part of the 50S ribosomal subunit.

Functionally, one of the primary rRNA binding proteins, this protein initially binds near the 5'-end of the 23S rRNA. It is important during the early stages of 50S assembly. It makes multiple contacts with different domains of the 23S rRNA in the assembled 50S subunit and ribosome. Forms part of the polypeptide exit tunnel. The chain is Large ribosomal subunit protein uL4 from Teredinibacter turnerae (strain ATCC 39867 / T7901).